The sequence spans 313 residues: Small glutamine-rich tetratricopeptide repeat-containing protein alpha (313 aa).

A disordered region spans residues 69-97; sequence KELPPDLRSPQETPPSEEDSAEAERLKTE. The residue at position 77 (Ser77) is a Phosphoserine. Residue Thr81 is modified to Phosphothreonine. Phosphoserine is present on Ser84. 3 TPR repeats span residues 91 to 124, 125 to 158, and 159 to 192; these read AERL…NPAN, AVYF…DPSY, and SKAY…DPDN. N6-acetyllysine is present on Lys137. Phosphoserine is present on Ser301. Thr303 carries the phosphothreonine modification. Ser305 is subject to Phosphoserine.

Belongs to the SGT family. In terms of assembly, homodimer. Homooligomer. Interacts with DNAJC5 and DNAJC5B. Interacts (via TPR repeats) with HSP90AA1. Interacts (via Gln-rich region) with SLC2A1. Interacts with HSP90AB1. Interacts (via TPR repeats) with HSPA8/Hsc70; the interaction is direct. Interacts with BAG6 (via ubiquitin-like domain); interaction prevents interaction between BAG6 and RNF126. Forms a multiprotein complex, at least composed of DNAJB12, DNAJB14, HSPA8/Hsc70 and SGTA; interaction with DNAJB14 and HSPA8/Hsc70 is direct.

The protein localises to the cytoplasm. The protein resides in the nucleus. Co-chaperone that binds misfolded and hydrophobic patches-containing client proteins in the cytosol. Mediates their targeting to the endoplasmic reticulum but also regulates their sorting to the proteasome when targeting fails. Functions in tail-anchored/type II transmembrane proteins membrane insertion constituting with ASNA1 and the BAG6 complex a targeting module. Functions upstream of the BAG6 complex and ASNA1, binding more rapidly the transmembrane domain of newly synthesized proteins. It is also involved in the regulation of the endoplasmic reticulum-associated misfolded protein catabolic process via its interaction with BAG6: collaborates with the BAG6 complex to maintain hydrophobic substrates in non-ubiquitinated states. Competes with RNF126 for interaction with BAG6, preventing the ubiquitination of client proteins associated with the BAG6 complex. Binds directly to HSC70 and HSP70 and regulates their ATPase activity. The protein is Small glutamine-rich tetratricopeptide repeat-containing protein alpha (SGTA) of Bos taurus (Bovine).